We begin with the raw amino-acid sequence, 106 residues long: Probable insulin-like peptide beta-type 2 (106 aa).

An N-terminal signal peptide occupies residues M1 to A15. The propeptide occupies T16–R56. Cystine bridges form between C58–C86, C70–C99, C73–C100, and C85–C90.

Belongs to the insulin family.

The protein resides in the secreted. This chain is Probable insulin-like peptide beta-type 2 (ins-2), found in Caenorhabditis elegans.